We begin with the raw amino-acid sequence, 408 residues long: Energy-coupling factor transporter ATP-binding protein EcfA1 (408 aa).

Residues 140–374 enclose the ABC transporter domain; it reads IEINHLSFKY…KDFLRNIQLD (235 aa). Residue 174-181 coordinates ATP; sequence GHNGSGKS.

Belongs to the ABC transporter superfamily. Energy-coupling factor EcfA family. As to quaternary structure, forms a stable energy-coupling factor (ECF) transporter complex composed of 2 membrane-embedded substrate-binding proteins (S component), 2 ATP-binding proteins (A component) and 2 transmembrane proteins (T component).

It localises to the cell membrane. Its function is as follows. ATP-binding (A) component of a common energy-coupling factor (ECF) ABC-transporter complex. Unlike classic ABC transporters this ECF transporter provides the energy necessary to transport a number of different substrates. In Mycoplasma mycoides subsp. mycoides SC (strain CCUG 32753 / NCTC 10114 / PG1), this protein is Energy-coupling factor transporter ATP-binding protein EcfA1.